The following is a 631-amino-acid chain: Phosphomethylpyrimidine synthase (631 aa).

Residues asparagine 239, methionine 268, tyrosine 297, histidine 333, 353-355 (SRG), 394-397 (DGLR), and glutamate 433 each bind substrate. Zn(2+) is bound at residue histidine 437. Tyrosine 460 provides a ligand contact to substrate. Histidine 501 provides a ligand contact to Zn(2+). Positions 581, 584, and 589 each coordinate [4Fe-4S] cluster.

The protein belongs to the ThiC family. As to quaternary structure, homodimer. [4Fe-4S] cluster is required as a cofactor.

The catalysed reaction is 5-amino-1-(5-phospho-beta-D-ribosyl)imidazole + S-adenosyl-L-methionine = 4-amino-2-methyl-5-(phosphooxymethyl)pyrimidine + CO + 5'-deoxyadenosine + formate + L-methionine + 3 H(+). The protein operates within cofactor biosynthesis; thiamine diphosphate biosynthesis. Catalyzes the synthesis of the hydroxymethylpyrimidine phosphate (HMP-P) moiety of thiamine from aminoimidazole ribotide (AIR) in a radical S-adenosyl-L-methionine (SAM)-dependent reaction. The chain is Phosphomethylpyrimidine synthase from Ralstonia nicotianae (strain ATCC BAA-1114 / GMI1000) (Ralstonia solanacearum).